The following is a 419-amino-acid chain: UDP-N-acetylglucosamine 1-carboxyvinyltransferase (419 aa).

22 to 23 (KN) is a binding site for phosphoenolpyruvate. Arginine 93 is a UDP-N-acetyl-alpha-D-glucosamine binding site. Cysteine 117 serves as the catalytic Proton donor. A 2-(S-cysteinyl)pyruvic acid O-phosphothioketal modification is found at cysteine 117. 2 residues coordinate UDP-N-acetyl-alpha-D-glucosamine: aspartate 307 and isoleucine 329.

It belongs to the EPSP synthase family. MurA subfamily.

Its subcellular location is the cytoplasm. It catalyses the reaction phosphoenolpyruvate + UDP-N-acetyl-alpha-D-glucosamine = UDP-N-acetyl-3-O-(1-carboxyvinyl)-alpha-D-glucosamine + phosphate. It functions in the pathway cell wall biogenesis; peptidoglycan biosynthesis. Its function is as follows. Cell wall formation. Adds enolpyruvyl to UDP-N-acetylglucosamine. The protein is UDP-N-acetylglucosamine 1-carboxyvinyltransferase of Shewanella piezotolerans (strain WP3 / JCM 13877).